The chain runs to 564 residues: uncharacterized protein (564 aa).

Over residues 1-17 (MRRPSTASLTRTPSRAS) the composition is skewed to polar residues. A disordered region spans residues 1-564 (MRRPSTASLT…ASTPSSEVIS (564 aa)). 2 stretches are compositionally biased toward low complexity: residues 79–97 (SPRT…RASP) and 114–134 (SPTG…ASPT). Over residues 153-168 (RSPSTASLTRTPSRAS) the composition is skewed to polar residues. The segment covering 170-179 (TRWPPRASPT) has biased composition (low complexity). The segment covering 250–271 (GSPPRASPMTPPRASPRTPPRA) has biased composition (pro residues). A compositionally biased stretch (low complexity) spans 272–299 (SPTTTPSRASLTRTPSWASPTTTPSRAS). Residues 318–351 (PTGTPSRASPTGTPSRASLTGSPSRASLTGTPSR) are compositionally biased toward polar residues. A compositionally biased stretch (low complexity) spans 378-416 (RASLTGTSSTASLTRTPSRASLTRTQSSSSLTRTPSMAS). Residues 467–564 (SRASLTRTPS…ASTPSSEVIS (98 aa)) are compositionally biased toward polar residues.

This is an uncharacterized protein from Homo sapiens (Human).